Here is an 881-residue protein sequence, read N- to C-terminus: Phosphoinositide 3-kinase regulatory subunit 5 (881 aa).

Positions 23–99 are heterodimerization; it reads SRDAVSSRWA…APHIPPDSEL (77 aa). Disordered regions lie at residues 312–339 and 472–499; these read PVAS…ERDS and PQAK…KLQT. Residues 316 to 330 show a composition bias toward acidic residues; the sequence is ENEEDEEEEEEDVET. The interaction with G beta gamma proteins stretch occupies residues 657–757; it reads PILADMILYY…WNDVEKVCTS (101 aa).

Heterodimer. Interacts with a catalytic subunit and with G beta gamma proteins.

It is found in the nucleus. The protein resides in the cytoplasm. The protein localises to the cell membrane. Its activity is regulated as follows. Greatly activated by G gamma proteins. Regulatory subunit of the PI3K gamma complex. This chain is Phosphoinositide 3-kinase regulatory subunit 5 (PIK3R5), found in Gallus gallus (Chicken).